The chain runs to 508 residues: uncharacterized protein (508 aa).

A helical membrane pass occupies residues 7–29 (ALAIVLALILSLALPELLFQLYP).

The protein localises to the membrane. This is an uncharacterized protein from Archaeoglobus fulgidus (strain ATCC 49558 / DSM 4304 / JCM 9628 / NBRC 100126 / VC-16).